We begin with the raw amino-acid sequence, 186 residues long: High mobility group protein B4 (186 aa).

2 consecutive DNA-binding regions (HMG box) follow at residues 9 to 79 (PKAN…MNYV) and 93 to 161 (PRRP…ELYR). A disordered region spans residues 77 to 98 (NYVGKRKKRRKRDPQEPRRPPS).

Belongs to the HMGB family.

It is found in the nucleus. It localises to the chromosome. This Homo sapiens (Human) protein is High mobility group protein B4 (HMGB4).